The chain runs to 20 residues: Alpha-basrubrin (20 aa).

Basic and acidic residues predominate over residues 1 to 13 (GADFQECMKEHSQ). A disordered region spans residues 1-20 (GADFQECMKEHSQKQHQHQG).

Functionally, possesses antifungal activity against B.cinerea, M.arachidicola and F.oxysporum but not C.comatus and R.solani. Inhibits HIV-1 reverse transcriptase and cell-free translation. The protein is Alpha-basrubrin of Basella alba (Malabar spinach).